Here is a 43-residue protein sequence, read N- to C-terminus: Photosystem I reaction center subunit IX (43 aa).

The helical transmembrane segment at 7-27 (YLSTAPVLATFWFGLLAGLLI) threads the bilayer.

This sequence belongs to the PsaJ family.

The protein resides in the plastid. It is found in the chloroplast thylakoid membrane. Functionally, may help in the organization of the PsaE and PsaF subunits. This Gnetum parvifolium (Small-leaved jointfir) protein is Photosystem I reaction center subunit IX.